Consider the following 786-residue polypeptide: Probable aminopeptidase 1 (786 aa).

Residues Glu103 and 235–239 (GAMEN) contribute to the substrate site. His270 contacts Zn(2+). Glu271 functions as the Proton acceptor in the catalytic mechanism. Positions 274 and 293 each coordinate Zn(2+).

The protein belongs to the peptidase M1 family. Zn(2+) is required as a cofactor.

It is found in the cytoplasm. In Sulfurisphaera tokodaii (strain DSM 16993 / JCM 10545 / NBRC 100140 / 7) (Sulfolobus tokodaii), this protein is Probable aminopeptidase 1 (ape1).